We begin with the raw amino-acid sequence, 480 residues long: Ochratoxinase (480 aa).

Residues histidine 111, histidine 113, lysine 246, histidine 287, and histidine 307 each contribute to the Zn(2+) site. Lysine 246 is a catalytic residue. Residue aspartate 378 is part of the active site.

It belongs to the metallo-dependent hydrolases superfamily. Ochratoxinase amidase 2 family. In terms of assembly, homooctamer. Requires Zn(2+) as cofactor.

It localises to the secreted. It carries out the reaction ochratoxin A + H2O = ochratoxin alpha + L-phenylalanine. The Zn(2+)-specific chelator 1,10-phenanthroline inhibits the enzyme activity. Functionally, carboxypeptidase that catalyzes the release of a C-terminal amino acid with specific catalytic activity for aromatic amino acids such as phenylalanine. Is able to degrade ochratoxin A, one of the five major mycotoxins most harmful to humans and animals that is produced by Aspergillus and Penicillium species and occurs in a wide range of agricultural products. This is Ochratoxinase from Aspergillus niger (strain ATCC 1015 / CBS 113.46 / FGSC A1144 / LSHB Ac4 / NCTC 3858a / NRRL 328 / USDA 3528.7).